A 487-amino-acid chain; its full sequence is Serine carboxypeptidase-like 37 (487 aa).

A signal peptide spans 1–28; sequence MVKQQDWSVTTCVLLFLFLASQIHCRSG. N-linked (GlcNAc...) asparagine glycosylation is present at Asn105. Cystine bridges form between Cys120-Cys368, Cys280-Cys291, and Cys315-Cys336. The active site involves Ser215. Residues Asn317, Asn357, and Asn375 are each glycosylated (N-linked (GlcNAc...) asparagine). Asp407 is an active-site residue. Asn423 and Asn449 each carry an N-linked (GlcNAc...) asparagine glycan. Residue His460 is part of the active site.

Belongs to the peptidase S10 family. In terms of tissue distribution, expressed in seedlings, roots, leaves, stems, flowers and siliques.

The protein localises to the secreted. Its function is as follows. Probable carboxypeptidase. This Arabidopsis thaliana (Mouse-ear cress) protein is Serine carboxypeptidase-like 37 (SCPL37).